The following is a 539-amino-acid chain: Cytochrome c oxidase subunit 1 homolog (539 aa).

2 helical membrane passes run 28–48 and 75–95; these read LFAA…LLLL and GVMA…VVAL. His117 is a binding site for heme b. A run of 11 helical transmembrane segments spans residues 118–138, 154–174, 187–207, 214–234, 265–285, 298–318, 330–350, 368–388, 402–422, 443–463, and 498–518; these read TSAV…FYVV, FVFW…LLGI, VDLW…GTIL, ISVA…LHIV, GHNA…YYFI, LSII…PHHL, LGMV…INGL, MMVM…MMSI, IGHV…GAIY, HFWL…VAGI, and LGGL…TMTI. Residues His266, His316, and His317 each contribute to the Cu cation site. Residues His404 and His406 each coordinate heme b.

It belongs to the heme-copper respiratory oxidase family. Requires Cu(2+) as cofactor. It depends on heme b as a cofactor.

The protein resides in the cell membrane. The catalysed reaction is 4 Fe(II)-[cytochrome c] + O2 + 8 H(+)(in) = 4 Fe(III)-[cytochrome c] + 2 H2O + 4 H(+)(out). It functions in the pathway energy metabolism; oxidative phosphorylation. Functionally, cytochrome c oxidase is the component of the respiratory chain that catalyzes the reduction of oxygen to water. Subunits 1-3 form the functional core of the enzyme complex. Co I is the catalytic subunit of the enzyme. Electrons originating in cytochrome c or a quinol are transferred to the bimetallic center formed by a high-spin heme and copper B. This is Cytochrome c oxidase subunit 1 homolog (fixN) from Agrobacterium tumefaciens (strain T37).